The chain runs to 100 residues: uncharacterized protein (100 aa).

This is an uncharacterized protein from Rickettsia prowazekii (strain Madrid E).